The chain runs to 1465 residues: DNA polymerase III PolC-type (1465 aa).

The 157-residue stretch at 427–583 (YVVFDVETTG…YDAEATGRLL (157 aa)) folds into the Exonuclease domain.

It belongs to the DNA polymerase type-C family. PolC subfamily.

The protein localises to the cytoplasm. It catalyses the reaction DNA(n) + a 2'-deoxyribonucleoside 5'-triphosphate = DNA(n+1) + diphosphate. Required for replicative DNA synthesis. This DNA polymerase also exhibits 3' to 5' exonuclease activity. In Streptococcus pyogenes serotype M18 (strain MGAS8232), this protein is DNA polymerase III PolC-type.